The following is a 490-amino-acid chain: Transcriptional regulator FleQ (490 aa).

Leu142 contacts 3',3'-c-di-GMP. ADP is bound by residues Val147 and 177–182 (GTGKEV). 3',3'-c-di-GMP-binding positions include 186–189 (NLHY) and 330–341 (ELISRMEHEKRG). 2 residues coordinate ADP: Arg334 and Arg363.

In terms of assembly, forms homodimers. Forms homohexamers that inhibit transcription initiation. Interacts with FleN; this complex is formed in the presence as well as in the absence of c-di-GMP or ATP.

C-di-GMP interaction leads to active site obstruction, hexameric ring destabilization thus relieving DNA bending and activating gene transcription. AAA+ ATPase enhancer-binding protein that acts as a transcription regulator and plays a role in the modulation of mucin adhesion and flagellar gene expression. In addition to flagella genes, also regulates expression of biofilm-related genes. Functions as a transcriptional repressor in the absence of c-di-GMP and as an activator when c-di-GMP is present. This is Transcriptional regulator FleQ from Pseudomonas aeruginosa (strain ATCC 15692 / DSM 22644 / CIP 104116 / JCM 14847 / LMG 12228 / 1C / PRS 101 / PAO1).